Consider the following 115-residue polypeptide: Large ribosomal subunit protein eL36 (115 aa).

It belongs to the eukaryotic ribosomal protein eL36 family. Component of the large ribosomal subunit.

It localises to the cytoplasm. Its subcellular location is the cytosol. Its function is as follows. Component of the large ribosomal subunit. This chain is Large ribosomal subunit protein eL36 (RpL36), found in Drosophila melanogaster (Fruit fly).